A 94-amino-acid chain; its full sequence is Co-chaperonin GroES (94 aa).

The protein belongs to the GroES chaperonin family. In terms of assembly, heptamer of 7 subunits arranged in a ring. Interacts with the chaperonin GroEL.

Its subcellular location is the cytoplasm. In terms of biological role, together with the chaperonin GroEL, plays an essential role in assisting protein folding. The GroEL-GroES system forms a nano-cage that allows encapsulation of the non-native substrate proteins and provides a physical environment optimized to promote and accelerate protein folding. GroES binds to the apical surface of the GroEL ring, thereby capping the opening of the GroEL channel. This Bacillus mycoides (strain KBAB4) (Bacillus weihenstephanensis) protein is Co-chaperonin GroES.